Here is a 422-residue protein sequence, read N- to C-terminus: Metallocarboxypeptidase A (422 aa).

The first 17 residues, 1-17, serve as a signal peptide directing secretion; it reads MRSVLSLALLAANVVTA. Positions 18-112 are cleaved as a propeptide — activation peptide; it reads AVVSPFDYSG…FEAYSAGYAP (95 aa). In terms of domain architecture, Peptidase M14 spans 119–419; the sequence is SYHSYQDHIS…AGTVAMLKAV (301 aa). The Zn(2+) site is built by His179 and Glu182. Substrate contacts are provided by residues 179–182, Arg237, and 254–255; these read HARE and NR. Cysteines 248 and 271 form a disulfide. A Zn(2+)-binding site is contributed by His309. A substrate-binding site is contributed by 310-311; sequence SY. Glu385 functions as the Proton donor/acceptor in the catalytic mechanism.

Belongs to the peptidase M14 family. Requires Zn(2+) as cofactor.

The protein localises to the secreted. Functionally, extracellular metalloprotease that contributes to pathogenicity. The polypeptide is Metallocarboxypeptidase A (MCPA) (Trichophyton equinum (Horse ringworm fungus)).